Consider the following 290-residue polypeptide: Bifunctional protein FolD (290 aa).

NADP(+) is bound by residues 164 to 166, Ser-193, and Ile-234; that span reads GRS.

It belongs to the tetrahydrofolate dehydrogenase/cyclohydrolase family. As to quaternary structure, homodimer.

It carries out the reaction (6R)-5,10-methylene-5,6,7,8-tetrahydrofolate + NADP(+) = (6R)-5,10-methenyltetrahydrofolate + NADPH. The catalysed reaction is (6R)-5,10-methenyltetrahydrofolate + H2O = (6R)-10-formyltetrahydrofolate + H(+). Its pathway is one-carbon metabolism; tetrahydrofolate interconversion. Catalyzes the oxidation of 5,10-methylenetetrahydrofolate to 5,10-methenyltetrahydrofolate and then the hydrolysis of 5,10-methenyltetrahydrofolate to 10-formyltetrahydrofolate. This chain is Bifunctional protein FolD, found in Cytophaga hutchinsonii (strain ATCC 33406 / DSM 1761 / CIP 103989 / NBRC 15051 / NCIMB 9469 / D465).